A 351-amino-acid chain; its full sequence is Hydroxymethylglutaryl-CoA synthase (351 aa).

E80 acts as the Proton donor/acceptor in catalysis. C112 (acyl-thioester intermediate) is an active-site residue. (3S)-3-hydroxy-3-methylglutaryl-CoA is bound by residues C112 and S153. CoA is bound at residue R199. (3S)-3-hydroxy-3-methylglutaryl-CoA-binding residues include T201 and H234. The Proton donor/acceptor role is filled by H234. CoA is bound at residue K239. 3 residues coordinate (3S)-3-hydroxy-3-methylglutaryl-CoA: R243, N266, and S296.

Belongs to the thiolase-like superfamily. Archaeal HMG-CoA synthase family. As to quaternary structure, interacts with acetoacetyl-CoA thiolase that catalyzes the precedent step in the pathway and with a DUF35 protein. The acetoacetyl-CoA thiolase/HMG-CoA synthase complex channels the intermediate via a fused CoA-binding site, which allows for efficient coupling of the endergonic thiolase reaction with the exergonic HMGCS reaction.

The catalysed reaction is acetoacetyl-CoA + acetyl-CoA + H2O = (3S)-3-hydroxy-3-methylglutaryl-CoA + CoA + H(+). The protein operates within metabolic intermediate biosynthesis; (R)-mevalonate biosynthesis; (R)-mevalonate from acetyl-CoA: step 2/3. Its function is as follows. Catalyzes the condensation of acetyl-CoA with acetoacetyl-CoA to form 3-hydroxy-3-methylglutaryl-CoA (HMG-CoA). Functions in the mevalonate (MVA) pathway leading to isopentenyl diphosphate (IPP), a key precursor for the biosynthesis of isoprenoid compounds that are building blocks of archaeal membrane lipids. This is Hydroxymethylglutaryl-CoA synthase from Thermoplasma acidophilum (strain ATCC 25905 / DSM 1728 / JCM 9062 / NBRC 15155 / AMRC-C165).